Consider the following 457-residue polypeptide: PDZ and LIM domain protein 7 (457 aa).

A PDZ domain is found at 1–85 (MDSFKVVLEG…RLSLGLSRAQ (85 aa)). Position 78 is a phosphoserine (Ser-78). 3 disordered regions span residues 82-142 (SRAQ…LVPD), 176-226 (TEFM…PWAV), and 239-258 (TSTVLTRHSQPATPTPLQSR). Arg-103 carries the post-translational modification Asymmetric dimethylarginine. Ser-111 carries the phosphoserine modification. Over residues 208–221 (EPWPGPTAPSPTSR) the composition is skewed to pro residues. Ser-247 carries the phosphoserine modification. 3 consecutive LIM zinc-binding domains span residues 280–338 (PVCH…VRYA), 339–398 (PSCA…MFGT), and 399–457 (KCHG…FSHV).

In terms of assembly, binds via its LIM zinc-binding 3 domain (LIM 3) to endocytic codes of INSR, but not with those of IGF1R, LDLR, TFRC, or EGFR. Interacts with various PKC isoforms through the LIM zinc-binding domains. Binds to RET in a phosphorylation-independent manner via its LIM zinc-binding domain 2 (LIM 2). Probably part of a complex with SHC and the RET dimer. Interacts with TPM2. Interacts with TBX4 and TBX5. As to expression, isoform 1 and isoform 2 are expressed ubiquitously, however, isoform 2 predominates in skeletal muscle, isoform 1 is more abundant in lung, spleen, leukocytes and fetal liver.

The protein resides in the cytoplasm. It is found in the cytoskeleton. Functionally, may function as a scaffold on which the coordinated assembly of proteins can occur. May play a role as an adapter that, via its PDZ domain, localizes LIM-binding proteins to actin filaments of both skeletal muscle and nonmuscle tissues. Involved in both of the two fundamental mechanisms of bone formation, direct bone formation (e.g. embryonic flat bones mandible and cranium), and endochondral bone formation (e.g. embryonic long bone development). Plays a role during fracture repair. Involved in BMP6 signaling pathway. The protein is PDZ and LIM domain protein 7 (PDLIM7) of Homo sapiens (Human).